Here is a 583-residue protein sequence, read N- to C-terminus: RuBisCO large subunit-binding protein subunit alpha, chloroplastic (583 aa).

A compositionally biased stretch (polar residues) spans 1–14; that stretch reads MATANALSSPSVLC. The segment at 1-35 is disordered; that stretch reads MATANALSSPSVLCSSRQGKLSGGSQQKGQRVSYR. A chloroplast-targeting transit peptide spans 1–45; the sequence is MATANALSSPSVLCSSRQGKLSGGSQQKGQRVSYRKANRRFSLRA. A compositionally biased stretch (low complexity) spans 15-31; that stretch reads SSRQGKLSGGSQQKGQR. Serine 89 carries the phosphoserine modification.

The protein belongs to the chaperonin (HSP60) family. As to quaternary structure, oligomer of probably six alpha and six beta subunits.

The protein localises to the plastid. Its subcellular location is the chloroplast. Functionally, this protein binds RuBisCO small and large subunits and is implicated in the assembly of the enzyme oligomer. This is RuBisCO large subunit-binding protein subunit alpha, chloroplastic from Brassica napus (Rape).